A 101-amino-acid chain; its full sequence is Small ribosomal subunit protein uS14 (101 aa).

This sequence belongs to the universal ribosomal protein uS14 family. As to quaternary structure, part of the 30S ribosomal subunit. Contacts proteins S3 and S10.

In terms of biological role, binds 16S rRNA, required for the assembly of 30S particles and may also be responsible for determining the conformation of the 16S rRNA at the A site. This chain is Small ribosomal subunit protein uS14, found in Histophilus somni (strain 2336) (Haemophilus somnus).